The sequence spans 297 residues: Giardin subunit alpha-6 (297 aa).

Annexin repeat units follow at residues 3-72, 74-146, 153-222, and 226-295; these read TTVQ…AYLW, KPGD…HWIL, FDID…AAHY, and HPAR…ILWR.

It belongs to the annexin family. Giardin subunit alpha subfamily.

The protein resides in the cytoplasm. Its subcellular location is the cytoskeleton. Functionally, giardins are involved in parasite attachment to the intestinal mucosa and in the cytoskeletal disassembly and reassembly that marks the transition from infectious trophozoite to transmissible cyst. They may interact with other cytoskeletal proteins such as microtubules in the microribbons or crossbridges, to maintain the integrity of the ventral disk. The sequence is that of Giardin subunit alpha-6 from Giardia intestinalis (Giardia lamblia).